A 357-amino-acid polypeptide reads, in one-letter code: Cobalt-precorrin-5B C(1)-methyltransferase (357 aa).

The protein belongs to the CbiD family.

It carries out the reaction Co-precorrin-5B + S-adenosyl-L-methionine = Co-precorrin-6A + S-adenosyl-L-homocysteine. It participates in cofactor biosynthesis; adenosylcobalamin biosynthesis; cob(II)yrinate a,c-diamide from sirohydrochlorin (anaerobic route): step 6/10. Catalyzes the methylation of C-1 in cobalt-precorrin-5B to form cobalt-precorrin-6A. This is Cobalt-precorrin-5B C(1)-methyltransferase from Paramagnetospirillum magneticum (strain ATCC 700264 / AMB-1) (Magnetospirillum magneticum).